Here is a 554-residue protein sequence, read N- to C-terminus: CTP synthase (554 aa).

Residues methionine 1–leucine 265 are amidoligase domain. Serine 13 contacts CTP. UTP is bound at residue serine 13. ATP is bound by residues serine 14–isoleucine 19 and aspartate 71. Aspartate 71 and glutamate 139 together coordinate Mg(2+). CTP is bound by residues aspartate 146–glutamate 148, lysine 186–glutamine 191, and lysine 222. UTP-binding positions include lysine 186–glutamine 191 and lysine 222. Positions threonine 292 to glycine 545 constitute a Glutamine amidotransferase type-1 domain. Glycine 353 is an L-glutamine binding site. The active-site Nucleophile; for glutamine hydrolysis is cysteine 380. L-glutamine contacts are provided by residues tyrosine 381–glutamine 384, glutamate 404, and arginine 471. Active-site residues include histidine 518 and glutamate 520.

This sequence belongs to the CTP synthase family. Homotetramer.

The enzyme catalyses UTP + L-glutamine + ATP + H2O = CTP + L-glutamate + ADP + phosphate + 2 H(+). It carries out the reaction L-glutamine + H2O = L-glutamate + NH4(+). The catalysed reaction is UTP + NH4(+) + ATP = CTP + ADP + phosphate + 2 H(+). It functions in the pathway pyrimidine metabolism; CTP biosynthesis via de novo pathway; CTP from UDP: step 2/2. Allosterically activated by GTP, when glutamine is the substrate; GTP has no effect on the reaction when ammonia is the substrate. The allosteric effector GTP functions by stabilizing the protein conformation that binds the tetrahedral intermediate(s) formed during glutamine hydrolysis. Inhibited by the product CTP, via allosteric rather than competitive inhibition. Functionally, catalyzes the ATP-dependent amination of UTP to CTP with either L-glutamine or ammonia as the source of nitrogen. Regulates intracellular CTP levels through interactions with the four ribonucleotide triphosphates. This chain is CTP synthase, found in Stenotrophomonas maltophilia (strain R551-3).